A 232-amino-acid chain; its full sequence is Enolase-phosphatase E1 (232 aa).

It belongs to the HAD-like hydrolase superfamily. MasA/MtnC family. Monomer. The cofactor is Mg(2+).

The catalysed reaction is 5-methylsulfanyl-2,3-dioxopentyl phosphate + H2O = 1,2-dihydroxy-5-(methylsulfanyl)pent-1-en-3-one + phosphate. The protein operates within amino-acid biosynthesis; L-methionine biosynthesis via salvage pathway; L-methionine from S-methyl-5-thio-alpha-D-ribose 1-phosphate: step 3/6. It functions in the pathway amino-acid biosynthesis; L-methionine biosynthesis via salvage pathway; L-methionine from S-methyl-5-thio-alpha-D-ribose 1-phosphate: step 4/6. Bifunctional enzyme that catalyzes the enolization of 2,3-diketo-5-methylthiopentyl-1-phosphate (DK-MTP-1-P) into the intermediate 2-hydroxy-3-keto-5-methylthiopentenyl-1-phosphate (HK-MTPenyl-1-P), which is then dephosphorylated to form the acireductone 1,2-dihydroxy-3-keto-5-methylthiopentene (DHK-MTPene). This is Enolase-phosphatase E1 from Acidiphilium cryptum (strain JF-5).